A 1686-amino-acid polypeptide reads, in one-letter code: Thrombospondin type-1 domain-containing protein 7A (1686 aa).

The signal sequence occupies residues 1-36; it reads MGLASRAPGKGGTSAGALASLFRVALLFFGLWDVQT. Over 37 to 1635 the chain is Extracellular; that stretch reads QTVANTRPTY…FGPDGKLKTW (1599 aa). TSP type-1 domains follow at residues 44–103, 107–181, and 183–236; these read PTYI…RVCD, ELYD…IPCP, and DCVV…GKCE. N-linked (GlcNAc...) asparagine glycosylation is present at N223. Residues 257 to 321 form a disordered region; the sequence is IRQARDTGEA…EKKRMRDPET (65 aa). Composition is skewed to basic and acidic residues over residues 259-272 and 294-321; these read QARD…PKAE and EKKE…DPET. TSP type-1 domains are found at residues 385 to 441, 448 to 535, 537 to 596, 656 to 717, 718 to 797, 799 to 859, 860 to 932, 934 to 985, 988 to 1061, 1063 to 1123, 1124 to 1191, 1193 to 1247, 1248 to 1311, 1313 to 1368, 1369 to 1439, and 1441 to 1502; these read DCEV…SPQG, VVYN…IPCP, ECEV…PSCY, DCVL…HPCT, VYHW…LPCK, DCVV…SVCP, GYRW…LPCQ, DCQL…QYCP, KYNA…IPCP, DCKL…SDCS, QYVW…LPCP, DCVL…SNCF, HYSY…VECP, NCQL…KPCF, SWRY…VPCP, and ECYL…GQCY. Intrachain disulfides connect C460–C530, C480–C534, and C491–C519. N475 carries N-linked (GlcNAc...) asparagine glycosylation. An N-linked (GlcNAc...) asparagine glycan is attached at N525. 2 disulfides stabilise this stretch: C657-C699 and C668-C672. An N-linked (GlcNAc...) asparagine glycan is attached at N701. Disulfide bonds link C711/C716, C729/C792, C756/C796, C767/C780, C800/C842, C811/C815, and C852/C858. N739 carries N-linked (GlcNAc...) asparagine glycosylation. N996 carries an N-linked (GlcNAc...) asparagine glycan. Disulfide bonds link C1000/C1056, C1022/C1060, C1033/C1046, C1064/C1101, C1075/C1079, and C1118/C1122. N1071 carries an N-linked (GlcNAc...) asparagine glycan. N-linked (GlcNAc...) asparagine glycosylation is present at N1212. C1240 and C1246 form a disulfide bridge. An N-linked (GlcNAc...) asparagine glycan is attached at N1252. Cystine bridges form between C1259-C1306, C1267-C1310, C1278-C1291, C1314-C1352, C1325-C1329, C1362-C1367, C1378-C1434, C1385-C1438, C1396-C1415, C1442-C1486, C1453-C1457, and C1496-C1501. A glycan (N-linked (GlcNAc...) asparagine) is linked at N1303. The N-linked (GlcNAc...) asparagine glycan is linked to N1393. A glycan (N-linked (GlcNAc...) asparagine) is linked at N1527. A helical membrane pass occupies residues 1636–1656; that stretch reads VYGVAAGAFVLLVFIVSMTYL. Residues 1657 to 1686 are Cytoplasmic-facing; that stretch reads ACKKPKKPQRRQMNNRLKPLTLAYDGDADM.

In terms of processing, extensively N-glycosylated.

Its subcellular location is the cell membrane. The protein localises to the cell projection. In terms of biological role, required for normal sprouting angiogenesis and normal embryonic development of intersegmental vessels (ISV). Required for normal function of the glomerular filtration barrier. Required for normal axon outgrowth on embryonic motor neurons at the level of the horizontal myoseptum. Required for normal expression of notch1b, suggesting that its functions in angiogenesis and neuron outgrowth are due to decreased expression of notch1b. Plays a role in actin cytoskeleton rearrangement. In Danio rerio (Zebrafish), this protein is Thrombospondin type-1 domain-containing protein 7A.